The primary structure comprises 258 residues: Methylthioribulose-1-phosphate dehydratase (258 aa).

The segment at 1 to 21 (MCSPTTENNNNNNDHLVQSSD) is disordered. Residue C105 coordinates substrate. H123 and H125 together coordinate Zn(2+). The active-site Proton donor/acceptor is E153. H210 provides a ligand contact to Zn(2+).

It belongs to the aldolase class II family. MtnB subfamily. Zn(2+) serves as cofactor.

It localises to the cytoplasm. It catalyses the reaction 5-(methylsulfanyl)-D-ribulose 1-phosphate = 5-methylsulfanyl-2,3-dioxopentyl phosphate + H2O. The protein operates within amino-acid biosynthesis; L-methionine biosynthesis via salvage pathway; L-methionine from S-methyl-5-thio-alpha-D-ribose 1-phosphate: step 2/6. Functionally, catalyzes the dehydration of methylthioribulose-1-phosphate (MTRu-1-P) into 2,3-diketo-5-methylthiopentyl-1-phosphate (DK-MTP-1-P). This Neurospora crassa (strain ATCC 24698 / 74-OR23-1A / CBS 708.71 / DSM 1257 / FGSC 987) protein is Methylthioribulose-1-phosphate dehydratase.